A 202-amino-acid chain; its full sequence is Na(+)-translocating NADH-quinone reductase subunit E (202 aa).

The next 6 helical transmembrane spans lie at Ala-11–Ile-31, Val-35–Val-55, Leu-79–Glu-99, Gly-114–Val-134, Thr-144–Ile-164, and Leu-180–Val-200.

The protein belongs to the NqrDE/RnfAE family. Composed of six subunits; NqrA, NqrB, NqrC, NqrD, NqrE and NqrF.

Its subcellular location is the cell inner membrane. It catalyses the reaction a ubiquinone + n Na(+)(in) + NADH + H(+) = a ubiquinol + n Na(+)(out) + NAD(+). Its function is as follows. NQR complex catalyzes the reduction of ubiquinone-1 to ubiquinol by two successive reactions, coupled with the transport of Na(+) ions from the cytoplasm to the periplasm. NqrA to NqrE are probably involved in the second step, the conversion of ubisemiquinone to ubiquinol. This Ectopseudomonas mendocina (strain ymp) (Pseudomonas mendocina) protein is Na(+)-translocating NADH-quinone reductase subunit E.